The sequence spans 501 residues: Eukaryotic translation initiation factor 3 subunit E (501 aa).

A PCI domain is found at 245–423 (CDLFFYTPYL…ESIESTSTNV (179 aa)). Phosphoserine occurs at positions 477 and 479.

The protein belongs to the eIF-3 subunit E family. Component of the eukaryotic translation initiation factor 3 (eIF-3) complex. The eIF-3 complex appears to include tif32/eif3a, SPAC25G10.08/eif3b, tif33/eif3c, SPBC4C3.07/eif3f, tif35/eif3g and sum1/eif3i. This set of common subunits may also associate exclusively with either moe1/eif3d and int6/eif3e, or with SPAC821.05/eif3h and SPAC1751.03/eif3m. The eIF-3 complex may also include SPAC3A12.13c/eif3j. Also interacts with the proteasome via rpn501/rpn502.

It localises to the cytoplasm. In terms of biological role, component of the eukaryotic translation initiation factor 3 (eIF-3) complex, which is involved in protein synthesis of a specialized repertoire of mRNAs and, together with other initiation factors, stimulates binding of mRNA and methionyl-tRNAi to the 40S ribosome. The eIF-3 complex specifically targets and initiates translation of a subset of mRNAs involved in cell proliferation (Potential). Required for maintaining the basal level of atf1 and for transcriptional activation of core environmental stress response genes (CESR genes) in response to histidine starvation. May positively regulate proteasome activity. Required for nuclear localization of the proteasome subunit rpn501/rpn502. This chain is Eukaryotic translation initiation factor 3 subunit E (int6), found in Schizosaccharomyces pombe (strain 972 / ATCC 24843) (Fission yeast).